Consider the following 100-residue polypeptide: uncharacterized protein (100 aa).

Residues 68–88 form a helical membrane-spanning segment; the sequence is VFLFFFTGSSPSFPAALLGLF.

The protein localises to the membrane. This is an uncharacterized protein from Saccharomyces cerevisiae (strain ATCC 204508 / S288c) (Baker's yeast).